We begin with the raw amino-acid sequence, 542 residues long: MVKKRFHFSLQTKIMGLIAALLVFVIGVLTITLAVQHTQGERRQAEQLAVQTARTISYMPPVKELIERKDGHAAQTQEVIEQMKEQTGAFAIYVLNEKGDIRSASGKSGLKKLERSREILFGGSHVSETKADGRRVIRGSAPIIKEQKGYSQVIGSVSVDFLQTETEQSIKKHLRNLSVIAVLVLLLGFIGAAVLAKSIRKDTLGLEPHEIAALYRERNAMLFAIREGIIATNREGVVTMMNVSAAEMLKLPEPVIHLPIDDVMPGAGLMSVLEKGEMLPNQEVSVNDQVFIINTKVMNQGGQAYGIVVSFREKTELKKLIDTLTEVRKYSEDLRAQTHEFSNKLYAILGLLELGEYDEAIDLIKEEYAIQNEQHDLLFHNIHSQQVQAILLGKISKASEKKVKLVIDENSSLAPLPAHIGLSHLITIIGNLIDNAFEAVAEQSVKEVLFFITDMGHDIVIEVSDTGPGVPPEKIEAVFERGYSSKGMRRGYGLANVKDSVRELGGWIELANQKTGGAVFTVFIPKEKQRGNPFDSHRDCGG.

Over 1–13 (MVKKRFHFSLQTK) the chain is Cytoplasmic. A helical membrane pass occupies residues 14–34 (IMGLIAALLVFVIGVLTITLA). At 35-175 (VQHTQGERRQ…TEQSIKKHLR (141 aa)) the chain is on the extracellular side. Residues 176–196 (NLSVIAVLVLLLGFIGAAVLA) form a helical membrane-spanning segment. Over 197–542 (KSIRKDTLGL…PFDSHRDCGG (346 aa)) the chain is Cytoplasmic. Residues 216–279 (RERNAMLFAI…MSVLEKGEML (64 aa)) form the PAS domain. A Histidine kinase domain is found at 336–528 (AQTHEFSNKL…VFTVFIPKEK (193 aa)). Phosphohistidine; by autocatalysis is present on His-339.

It localises to the cell membrane. It carries out the reaction ATP + protein L-histidine = ADP + protein N-phospho-L-histidine.. Functionally, member of the two-component regulatory system CitT/CitS. Regulates the expression of the citM-yflN operon. Functions probably as a membrane-associated protein kinase that phosphorylates CitT in response to environmental citrate or Mg(2+)-citrate complex. This is Sensor protein CitS (citS) from Bacillus subtilis (strain 168).